The sequence spans 277 residues: Caspase-3 (277 aa).

At methionine 1 the chain carries N-acetylmethionine. 2 propeptides span residues 1-9 and 10-28; these read MENTENSVD and SKSI…KSVD. Residues 1-10 show a composition bias toward polar residues; sequence MENTENSVDS. Positions 1-25 are disordered; sequence MENTENSVDSKSIKNSEPKIIHGSK. The residue at position 11 (lysine 11) is an N6-acetyllysine. Positions 11–20 are enriched in basic and acidic residues; sequence KSIKNSEPKI. Serine 26 is subject to Phosphoserine. Residues histidine 121 and cysteine 163 contribute to the active site. Cysteine 163 bears the S-nitrosocysteine; in inhibited form mark.

The protein belongs to the peptidase C14A family. In terms of assembly, heterotetramer that consists of two anti-parallel arranged heterodimers, each one formed by a 17 kDa (p17) and a 12 kDa (p12) subunit. Interacts with BIRC6/bruce. In terms of processing, cleavage by granzyme B, caspase-6, caspase-8 and caspase-10 generates the two active subunits. Additional processing of the propeptides is likely due to the autocatalytic activity of the activated protease. Active heterodimers between the small subunit of caspase-7 protease and the large subunit of caspase-3 also occur and vice versa. Post-translationally, S-nitrosylated on its catalytic site cysteine in unstimulated cell lines and denitrosylated upon activation of the Fas apoptotic pathway, associated with an increase in intracellular caspase activity. Fas therefore activates caspase-3 not only by inducing the cleavage of the caspase zymogen to its active subunits, but also by stimulating the denitrosylation of its active site thiol. Ubiquitinated by BIRC6; this activity is inhibited by DIABLO/SMAC.

It is found in the cytoplasm. It catalyses the reaction Strict requirement for an Asp residue at positions P1 and P4. It has a preferred cleavage sequence of Asp-Xaa-Xaa-Asp-|- with a hydrophobic amino-acid residue at P2 and a hydrophilic amino-acid residue at P3, although Val or Ala are also accepted at this position.. With respect to regulation, inhibited by BIRC6; following inhibition of BIRC6-caspase binding by DIABLO/SMAC, BIRC6 is subjected to caspase cleavage, leading to an increase in active caspases. Its function is as follows. Involved in the activation cascade of caspases responsible for apoptosis execution. At the onset of apoptosis, it proteolytically cleaves poly(ADP-ribose) polymerase PARP1 at a '216-Asp-|-Gly-217' bond. Cleaves and activates sterol regulatory element binding proteins (SREBPs) between the basic helix-loop-helix leucine zipper domain and the membrane attachment domain. Cleaves and activates caspase-6, -7 and -9 (CASP6, CASP7 and CASP9, respectively). Cleaves and inactivates interleukin-18 (IL18). Triggers cell adhesion in sympathetic neurons through RET cleavage. Cleaves IL-1 beta between an Asp and an Ala, releasing the mature cytokine which is involved in a variety of inflammatory processes. Cleaves and inhibits serine/threonine-protein kinase AKT1 in response to oxidative stress. Acts as an inhibitor of type I interferon production during virus-induced apoptosis by mediating cleavage of antiviral proteins CGAS, IRF3 and MAVS, thereby preventing cytokine overproduction. Also involved in pyroptosis by mediating cleavage and activation of gasdermin-E (GSDME). Cleaves XRCC4 and phospholipid scramblase proteins XKR4, XKR8 and XKR9, leading to promote phosphatidylserine exposure on apoptotic cell surface. Cleaves BIRC6 following inhibition of BIRC6-caspase binding by DIABLO/SMAC. In Saimiri boliviensis boliviensis (Bolivian squirrel monkey), this protein is Caspase-3 (CASP3).